The sequence spans 65 residues: Alpha-conotoxine-like Am1.5 (65 aa).

Positions methionine 1–serine 21 are cleaved as a signal peptide. Residues phenylalanine 22–arginine 46 constitute a propeptide that is removed on maturation. 4-carboxyglutamate is present on glutamate 49. The interval serine 52–proline 54 is ser-Xaa-Pro motif, crucial for potent interaction with nAChR. 4-hydroxyproline is present on residues proline 54 and proline 61. Position 62 is a 4-carboxyglutamate (glutamate 62).

Belongs to the conotoxin A superfamily. In terms of processing, contains 2 disulfide bonds. As to expression, expressed by the venom duct.

The protein localises to the secreted. Its function is as follows. Alpha-conotoxins act on postsynaptic membranes, they bind to the nicotinic acetylcholine receptors (nAChR) and thus inhibit them. The polypeptide is Alpha-conotoxine-like Am1.5 (Conus amadis (Amadis cone)).